The following is a 571-amino-acid chain: Peptide-N4-(N-acetyl-beta-glucosaminyl)asparagine amidase A (571 aa).

Asparagine 121, asparagine 143, asparagine 197, asparagine 241, asparagine 318, asparagine 367, asparagine 390, asparagine 423, asparagine 457, asparagine 481, asparagine 524, and asparagine 529 each carry an N-linked (GlcNAc...) asparagine glycan.

As to quaternary structure, heterodimer of a large and a small chain. Post-translationally, is highly glycosylated and is largly resistant against self-deglycosylation.

It catalyses the reaction Hydrolysis of an N(4)-(acetyl-beta-D-glucosaminyl)asparagine residue in which the glucosamine residue may be further glycosylated, to yield a (substituted) N-acetyl-beta-D-glucosaminylamine and a peptide containing an aspartate residue.. This chain is Peptide-N4-(N-acetyl-beta-glucosaminyl)asparagine amidase A, found in Prunus dulcis (Almond).